The sequence spans 615 residues: Sterol 3-beta-glucosyltransferase UGT80B1 (615 aa).

A disordered region spans residues 1–54 (MASNVFDHPLQELEGEDNGVKSEKASLLETSGSVDTTPEDSGHRSSDGHRGLDH). Residues 40–54 (DSGHRSSDGHRGLDH) are compositionally biased toward basic and acidic residues.

This sequence belongs to the glycosyltransferase 28 family. In terms of tissue distribution, expressed in developing seeds, seedlings, leaves and around the apical tip of cotyledons. In embryo, expressed in the seed coat and cotyledons.

It carries out the reaction a sterol + UDP-alpha-D-glucose = a sterol 3-beta-D-glucoside + UDP + H(+). Functionally, involved in the biosynthesis of sterol glucosides. Catalyzes the synthesis of steryl glycosides (SGs) and acyl steryl glycosides (ASGs) which are the most abundant sterol derivatives in higher plants. Can act on several sterols like sitosterol, campesterol and stigmasterol. Is required for embryonic development, seed suberin accumulation, cutin formation and flavanoid accumulation in the seed coat. Both UGT80A2 and UGT80B1 are required for the normal production of SGs and ASGs in seeds. This is Sterol 3-beta-glucosyltransferase UGT80B1 from Arabidopsis thaliana (Mouse-ear cress).